The following is a 357-amino-acid chain: Peptide chain release factor 1 (357 aa).

Gln-232 carries the N5-methylglutamine modification.

This sequence belongs to the prokaryotic/mitochondrial release factor family. Methylated by PrmC. Methylation increases the termination efficiency of RF1.

Its subcellular location is the cytoplasm. Peptide chain release factor 1 directs the termination of translation in response to the peptide chain termination codons UAG and UAA. The sequence is that of Peptide chain release factor 1 from Oleidesulfovibrio alaskensis (strain ATCC BAA-1058 / DSM 17464 / G20) (Desulfovibrio alaskensis).